The sequence spans 261 residues: Zaragozic acid A biosynthesis cluster protein 8 (261 aa).

Residues 242–254 (GTRSHTPAATQRR) are compositionally biased toward polar residues. Positions 242–261 (GTRSHTPAATQRRGQGRGCG) are disordered.

The protein operates within secondary metabolite biosynthesis. Its function is as follows. Part of the gene cluster that mediates the biosynthesis of squalestatin S1 (SQS1, also known as zaragozic acid A), a heavily oxidized fungal polyketide that offers potent cholesterol lowering activity by targeting squalene synthase (SS). SQS1 is composed of a 2,8-dioxobicyclic[3.2.1]octane-3,4,5-tricarboxyclic acid core that is connected to two lipophilic polyketide arms. These initial steps feature the priming of an unusual benzoic acid starter unit onto the highly reducing polyketide synthase clz14, followed by oxaloacetate extension and product release to generate a tricarboxylic acid containing product. The phenylalanine ammonia lyase (PAL) clz10 and the acyl-CoA ligase clz12 are involved in transforming phenylalanine into benzoyl-CoA. The citrate synthase-like protein clz17 is involved in connecting the C-alpha-carbons of the hexaketide chain and oxaloacetate to afford the tricarboxylic acid unit. The potential hydrolytic enzymes, clz11 and clz13, are in close proximity to pks2 and may participate in product release. On the other side, the tetraketide arm is synthesized by a the squalestatin tetraketide synthase clz2 and enzymatically esterified to the core in the last biosynthetic step, by the acetyltransferase clz6. The biosynthesis of the tetraketide must involve 3 rounds of chain extension. After the first and second rounds methyl-transfer occurs, and in all rounds of extension the ketoreductase and dehydratase are active. The enoyl reductase and C-MeT of clz2 are not active in the final round of extension. The acetyltransferase clz6 appears to have a broad substrate selectivity for its acyl CoA substrate, allowing the in vitro synthesis of novel squalestatins. The biosynthesis of SQS1 requires several oxidative steps likely performed by oxidoreductases clz3, clz15 and clz16. Finally, in support of the identification of the cluster as being responsible for SQS1 production, the cluster contains a gene encoding a putative squalene synthase (SS) clz20, suggesting a likely mechanism for self-resistance. This Cochliobolus lunatus (Filamentous fungus) protein is Zaragozic acid A biosynthesis cluster protein 8.